Consider the following 111-residue polypeptide: Large ribosomal subunit protein uL24 (111 aa).

The protein belongs to the universal ribosomal protein uL24 family. In terms of assembly, part of the 50S ribosomal subunit.

Its function is as follows. One of two assembly initiator proteins, it binds directly to the 5'-end of the 23S rRNA, where it nucleates assembly of the 50S subunit. In terms of biological role, one of the proteins that surrounds the polypeptide exit tunnel on the outside of the subunit. In Bifidobacterium longum (strain DJO10A), this protein is Large ribosomal subunit protein uL24.